A 220-amino-acid chain; its full sequence is Cytidylate kinase (220 aa).

ATP is bound at residue 9–17 (GPAASGKST).

Belongs to the cytidylate kinase family. Type 1 subfamily.

It localises to the cytoplasm. The enzyme catalyses CMP + ATP = CDP + ADP. It carries out the reaction dCMP + ATP = dCDP + ADP. This Thermotoga sp. (strain RQ2) protein is Cytidylate kinase.